Here is an 811-residue protein sequence, read N- to C-terminus: Vacuolar protein sorting-associated protein 70 (811 aa).

The segment covering 1-21 (MRMIQRERKREKEEGQLKERT) has biased composition (basic and acidic residues). The interval 1–63 (MRMIQRERKR…MNDSFTLTSR (63 aa)) is disordered. N-linked (GlcNAc...) asparagine glycosylation is present at N55. The helical transmembrane segment at 90-110 (FMYLILASLLLYMGFVAAFAP) threads the bilayer. N-linked (GlcNAc...) asparagine glycosylation occurs at N237. The interval 334-367 (FSDTPGDPTTPGYPSKDSDTEHMSPVGRVPRIPS) is disordered. Residues 336–345 (DTPGDPTTPG) show a composition bias toward low complexity. Positions 445, 456, and 522 each coordinate Zn(2+). N568 and N599 each carry an N-linked (GlcNAc...) asparagine glycan. H607 contributes to the Zn(2+) binding site. The N-linked (GlcNAc...) asparagine glycan is linked to N670.

The protein belongs to the peptidase M28 family. M28B subfamily. Requires Zn(2+) as cofactor.

Its subcellular location is the membrane. In terms of biological role, involved in vacuolar protein sorting. This Saccharomyces cerevisiae (strain ATCC 204508 / S288c) (Baker's yeast) protein is Vacuolar protein sorting-associated protein 70 (VPS70).